The chain runs to 120 residues: Large ribosomal subunit protein uL18 (120 aa).

It belongs to the universal ribosomal protein uL18 family. Part of the 50S ribosomal subunit; part of the 5S rRNA/L5/L18/L25 subcomplex. Contacts the 5S and 23S rRNAs.

Functionally, this is one of the proteins that bind and probably mediate the attachment of the 5S RNA into the large ribosomal subunit, where it forms part of the central protuberance. In Allorhizobium ampelinum (strain ATCC BAA-846 / DSM 112012 / S4) (Agrobacterium vitis (strain S4)), this protein is Large ribosomal subunit protein uL18.